A 151-amino-acid chain; its full sequence is Large ribosomal subunit protein uL13 (151 aa).

It belongs to the universal ribosomal protein uL13 family. In terms of assembly, part of the 50S ribosomal subunit.

This protein is one of the early assembly proteins of the 50S ribosomal subunit, although it is not seen to bind rRNA by itself. It is important during the early stages of 50S assembly. The protein is Large ribosomal subunit protein uL13 of Acaryochloris marina (strain MBIC 11017).